The primary structure comprises 231 residues: Ureidoacrylate amidohydrolase RutB (231 aa).

Asp-25 functions as the Proton acceptor in the catalytic mechanism. Residue Lys-134 is part of the active site. Catalysis depends on Cys-167, which acts as the Nucleophile.

This sequence belongs to the isochorismatase family. RutB subfamily.

It carries out the reaction (Z)-3-ureidoacrylate + H2O + H(+) = (Z)-3-aminoacrylate + NH4(+) + CO2. The enzyme catalyses (Z)-3-ureidoacrylate + H2O = (Z)-3-aminoacrylate + carbamate + H(+). The catalysed reaction is (Z)-2-methylureidoacrylate + H2O + H(+) = (Z)-2-methylaminoacrylate + NH4(+) + CO2. Its function is as follows. Hydrolyzes ureidoacrylate to form aminoacrylate and carbamate. The carbamate hydrolyzes spontaneously, thereby releasing one of the nitrogen atoms of the pyrimidine ring as ammonia and one of its carbon atoms as CO2. This is Ureidoacrylate amidohydrolase RutB from Escherichia coli O157:H7 (strain EC4115 / EHEC).